The primary structure comprises 183 residues: Capsid protein (183 aa).

Residues 136–183 are disordered; the sequence is NAPILSTLPETTVVRRRGRSPRRRTPSPRRRRSQSPRRRRSQSRESQC. Residues 149–176 show a composition bias toward basic residues; that stretch reads VRRRGRSPRRRTPSPRRRRSQSPRRRRS. A phosphoserine; by host mark is found at serine 155, serine 162, and serine 170. Residues 155-161 form a 1; half-length repeat; the sequence is SPRRRTP. The tract at residues 155 to 177 is 3 X 8 AA repeats of S-P-R-R-R-[PR]-S-Q; it reads SPRRRTPSPRRRRSQSPRRRRSQ. Residues 158–175 carry the Bipartite nuclear localization signal motif; it reads RRTPSPRRRRSQSPRRRR. Tandem repeats lie at residues 162–169 and 170–177. The interval 177–183 is RNA binding; the sequence is QSRESQC.

This sequence belongs to the orthohepadnavirus core antigen family. As to quaternary structure, homodimerizes, then multimerizes. Interacts with cytosol exposed regions of viral L glycoprotein present in the reticulum-to-Golgi compartment. Interacts with human FLNB. Phosphorylated form interacts with host importin alpha; this interaction depends on the exposure of the NLS, which itself depends upon genome maturation and/or phosphorylation of the capsid protein. Interacts with host NUP153. Post-translationally, phosphorylated by host SRPK1, SRPK2, and maybe protein kinase C or GAPDH. Phosphorylation is critical for pregenomic RNA packaging. Protein kinase C phosphorylation is stimulated by HBx protein and may play a role in transport of the viral genome to the nucleus at the late step during the viral replication cycle.

It localises to the virion. The protein localises to the host cytoplasm. In terms of biological role, self assembles to form an icosahedral capsid. Most capsids appear to be large particles with an icosahedral symmetry of T=4 and consist of 240 copies of capsid protein, though a fraction forms smaller T=3 particles consisting of 180 capsid proteins. Entering capsids are transported along microtubules to the nucleus. Phosphorylation of the capsid is thought to induce exposure of nuclear localization signal in the C-terminal portion of the capsid protein that allows binding to the nuclear pore complex via the importin (karyopherin-) alpha and beta. Capsids are imported in intact form through the nuclear pore into the nuclear basket, where it probably binds NUP153. Only capsids that contain the mature viral genome can release the viral DNA and capsid protein into the nucleoplasm. Immature capsids get stuck in the basket. Capsids encapsulate the pre-genomic RNA and the P protein. Pre-genomic RNA is reverse-transcribed into DNA while the capsid is still in the cytoplasm. The capsid can then either be directed to the nucleus, providing more genomes for transcription, or bud through the endoplasmic reticulum to provide new virions. The protein is Capsid protein of Hepatitis B virus genotype B1 subtype adw (isolate Japan/pJDW233/1988) (HBV-B).